Consider the following 303-residue polypeptide: tRNA (guanine-N(7)-)-methyltransferase (303 aa).

The disordered stretch occupies residues 1–64 (MPKPHQVQVI…STSDKISLPR (64 aa)). Residues 10–38 (IKDRETQLREQQEAESKRRTYRDVKEETR) show a composition bias toward basic and acidic residues. S-adenosyl-L-methionine is bound by residues G118, 141-142 (EI), 177-178 (NA), and C197. D200 is an active-site residue. S-adenosyl-L-methionine is bound at residue 275-277 (TEE).

It belongs to the class I-like SAM-binding methyltransferase superfamily. TrmB family. As to quaternary structure, forms a complex with TRM82.

The protein resides in the nucleus. It carries out the reaction guanosine(46) in tRNA + S-adenosyl-L-methionine = N(7)-methylguanosine(46) in tRNA + S-adenosyl-L-homocysteine. The protein operates within tRNA modification; N(7)-methylguanine-tRNA biosynthesis. In terms of biological role, catalyzes the formation of N(7)-methylguanine at position 46 (m7G46) in tRNA. The protein is tRNA (guanine-N(7)-)-methyltransferase of Scheffersomyces stipitis (strain ATCC 58785 / CBS 6054 / NBRC 10063 / NRRL Y-11545) (Yeast).